The sequence spans 92 residues: Small ribosomal subunit protein uS19 (92 aa).

This sequence belongs to the universal ribosomal protein uS19 family.

Protein S19 forms a complex with S13 that binds strongly to the 16S ribosomal RNA. The sequence is that of Small ribosomal subunit protein uS19 from Aeromonas hydrophila subsp. hydrophila (strain ATCC 7966 / DSM 30187 / BCRC 13018 / CCUG 14551 / JCM 1027 / KCTC 2358 / NCIMB 9240 / NCTC 8049).